Consider the following 124-residue polypeptide: Holo-[acyl-carrier-protein] synthase (124 aa).

Asp7 and Glu55 together coordinate Mg(2+).

Belongs to the P-Pant transferase superfamily. AcpS family. Mg(2+) serves as cofactor.

Its subcellular location is the cytoplasm. It carries out the reaction apo-[ACP] + CoA = holo-[ACP] + adenosine 3',5'-bisphosphate + H(+). Its function is as follows. Transfers the 4'-phosphopantetheine moiety from coenzyme A to a Ser of acyl-carrier-protein. This chain is Holo-[acyl-carrier-protein] synthase, found in Borreliella afzelii (strain PKo) (Borrelia afzelii).